We begin with the raw amino-acid sequence, 869 residues long: Probable beta-glucosidase F (869 aa).

Positions 1–19 (MRVLSAIALVASLVPSALS) are cleaved as a signal peptide. N-linked (GlcNAc...) asparagine glycosylation is found at Asn-69, Asn-77, and Asn-261. Asp-289 is an active-site residue. N-linked (GlcNAc...) asparagine glycans are attached at residues Asn-332, Asn-364, Asn-399, Asn-425, and Asn-478. Positions 678–698 (AYPPTRPPKGPTPTYPTTIPN) are disordered. Pro residues predominate over residues 681–691 (PTRPPKGPTPT). The N-linked (GlcNAc...) asparagine glycan is linked to Asn-728.

The protein belongs to the glycosyl hydrolase 3 family.

The protein localises to the secreted. The enzyme catalyses Hydrolysis of terminal, non-reducing beta-D-glucosyl residues with release of beta-D-glucose.. Its pathway is glycan metabolism; cellulose degradation. Functionally, beta-glucosidases are one of a number of cellulolytic enzymes involved in the degradation of cellulosic biomass. Catalyzes the last step releasing glucose from the inhibitory cellobiose. The polypeptide is Probable beta-glucosidase F (bglF) (Neosartorya fischeri (strain ATCC 1020 / DSM 3700 / CBS 544.65 / FGSC A1164 / JCM 1740 / NRRL 181 / WB 181) (Aspergillus fischerianus)).